Reading from the N-terminus, the 348-residue chain is MEMSFRWYGEDDPVTLENIGQIPTMKGIVTAIYDVPVGEVWSRERIQQLKEKVEAAGLKISVIESVPVHEDIKLGRPTRDLLIDNYIQTVKNLAAEGIDTICYNFMPVFDWTRTDLAYQYPDGSTALIFDETVSKKMDPVNGELSLPGWDASYSKEEMKAIMDAYAEIDEEKLWENLTYFIKRIIPEAEAVGVKMAIHPDDPPYSIFGLPRIITGLEAIERFVKLYDSKSNGITLCVGSYASDPQNDVLEISRRAFELERVNFVHARNIKLGDGKSFKESAHPSEYGSIDMYEVIKLCHEFGFEGAIRPDHGRMIWGETGRPGYGLYDRALGATYLSGLYEAVIKGSK.

It belongs to the mannonate dehydratase family. Fe(2+) is required as a cofactor. Requires Mn(2+) as cofactor.

It catalyses the reaction D-mannonate = 2-dehydro-3-deoxy-D-gluconate + H2O. The protein operates within carbohydrate metabolism; pentose and glucuronate interconversion. Functionally, catalyzes the dehydration of D-mannonate. This is Mannonate dehydratase from Streptococcus agalactiae serotype Ia (strain ATCC 27591 / A909 / CDC SS700).